Consider the following 210-residue polypeptide: Glutathione S-transferase P (210 aa).

The GST N-terminal domain occupies 2 to 81; sequence PPYTIVYFPV…HLGRSLGLYG (80 aa). Tyrosine 4 carries the post-translational modification Phosphotyrosine; by EGFR. Glutathione contacts are provided by residues tyrosine 8, arginine 14, tryptophan 39, lysine 45, and 52 to 53; that span reads QL. Threonine 62 bears the Phosphothreonine mark. A glutathione-binding site is contributed by 65-66; the sequence is QS. Residues 83-204 form the GST C-terminal domain; sequence DQKEAALVDM…SSPDHLNRPI (122 aa). Residues lysine 103 and lysine 116 each carry the N6-succinyllysine modification. The residue at position 128 (lysine 128) is an N6-acetyllysine.

The protein belongs to the GST superfamily. Pi family. Homodimer. Interacts with CDK5. Present in kidney, lung, testis and placenta, very low levels in liver.

The protein localises to the cytoplasm. It is found in the mitochondrion. Its subcellular location is the nucleus. The enzyme catalyses RX + glutathione = an S-substituted glutathione + a halide anion + H(+). The catalysed reaction is prostaglandin J2 + glutathione = prostaglandin J2-S-(R)-glutathione. It carries out the reaction prostaglandin J2 + glutathione = prostaglandin J2-S-(S)-glutathione. It catalyses the reaction prostaglandin A2 + glutathione = prostaglandin A2-S-(S)-glutathione. The enzyme catalyses 11(S)-hydroxy-14(S),15(S)-epoxy-(5Z,8Z,12E)-eicosatrienoate + glutathione = (11S,15S)-dihydroxy-14(R)-S-glutathionyl-(5Z,8Z,12E)-eicosatrienoate. Conjugation of reduced glutathione to a wide number of exogenous and endogenous hydrophobic electrophiles. Involved in the formation of glutathione conjugates of both prostaglandin A2 (PGA2) and prostaglandin J2 (PGJ2). Participates in the formation of novel hepoxilin regioisomers. Negatively regulates CDK5 activity via p25/p35 translocation to prevent neurodegeneration. The sequence is that of Glutathione S-transferase P from Rattus norvegicus (Rat).